The primary structure comprises 141 residues: Large ribosomal subunit protein uL11 (141 aa).

This sequence belongs to the universal ribosomal protein uL11 family. As to quaternary structure, part of the ribosomal stalk of the 50S ribosomal subunit. Interacts with L10 and the large rRNA to form the base of the stalk. L10 forms an elongated spine to which L12 dimers bind in a sequential fashion forming a multimeric L10(L12)X complex. In terms of processing, one or more lysine residues are methylated.

In terms of biological role, forms part of the ribosomal stalk which helps the ribosome interact with GTP-bound translation factors. This chain is Large ribosomal subunit protein uL11, found in Thermotoga petrophila (strain ATCC BAA-488 / DSM 13995 / JCM 10881 / RKU-1).